The sequence spans 553 residues: Dihydroxy-acid dehydratase (553 aa).

Residue Cys-49 coordinates [2Fe-2S] cluster. Position 81 (Asp-81) interacts with Mg(2+). Cys-122 provides a ligand contact to [2Fe-2S] cluster. The Mg(2+) site is built by Asp-123 and Lys-124. Lys-124 carries the post-translational modification N6-carboxylysine. Cys-194 contributes to the [2Fe-2S] cluster binding site. Glu-444 is a binding site for Mg(2+). Ser-470 functions as the Proton acceptor in the catalytic mechanism.

This sequence belongs to the IlvD/Edd family. In terms of assembly, homodimer. Requires [2Fe-2S] cluster as cofactor. Mg(2+) serves as cofactor.

It carries out the reaction (2R)-2,3-dihydroxy-3-methylbutanoate = 3-methyl-2-oxobutanoate + H2O. The enzyme catalyses (2R,3R)-2,3-dihydroxy-3-methylpentanoate = (S)-3-methyl-2-oxopentanoate + H2O. It functions in the pathway amino-acid biosynthesis; L-isoleucine biosynthesis; L-isoleucine from 2-oxobutanoate: step 3/4. It participates in amino-acid biosynthesis; L-valine biosynthesis; L-valine from pyruvate: step 3/4. Functions in the biosynthesis of branched-chain amino acids. Catalyzes the dehydration of (2R,3R)-2,3-dihydroxy-3-methylpentanoate (2,3-dihydroxy-3-methylvalerate) into 2-oxo-3-methylpentanoate (2-oxo-3-methylvalerate) and of (2R)-2,3-dihydroxy-3-methylbutanoate (2,3-dihydroxyisovalerate) into 2-oxo-3-methylbutanoate (2-oxoisovalerate), the penultimate precursor to L-isoleucine and L-valine, respectively. In Aeropyrum pernix (strain ATCC 700893 / DSM 11879 / JCM 9820 / NBRC 100138 / K1), this protein is Dihydroxy-acid dehydratase.